The primary structure comprises 265 residues: Small ribosomal subunit protein uS2 (265 aa).

The tract at residues 231 to 265 (VEEEYEDYEGSEEDYDYDETEYADSVIPEDGEEAE) is disordered.

This sequence belongs to the universal ribosomal protein uS2 family.

The protein is Small ribosomal subunit protein uS2 of Nostoc sp. (strain PCC 7120 / SAG 25.82 / UTEX 2576).